Here is a 212-residue protein sequence, read N- to C-terminus: Ribonuclease HII (212 aa).

Residues 1 to 206 enclose the RNase H type-2 domain; sequence MILVGIDEAG…LQDIAPNYYI (206 aa). A divalent metal cation is bound by residues Asp7, Glu8, and Asp104.

Belongs to the RNase HII family. Requires Mn(2+) as cofactor. Mg(2+) serves as cofactor.

It is found in the cytoplasm. The catalysed reaction is Endonucleolytic cleavage to 5'-phosphomonoester.. Its function is as follows. Endonuclease that specifically degrades the RNA of RNA-DNA hybrids. In Sulfolobus acidocaldarius (strain ATCC 33909 / DSM 639 / JCM 8929 / NBRC 15157 / NCIMB 11770), this protein is Ribonuclease HII.